Reading from the N-terminus, the 127-residue chain is Fluoride-specific ion channel FluC (127 aa).

Transmembrane regions (helical) follow at residues 8–28 (LLIA…QYWF), 37–57 (PWGT…VYAI), 68–88 (WKFL…TFSY), and 100–120 (ILFL…AFAG). Na(+) contacts are provided by Gly-78 and Thr-81.

The protein belongs to the fluoride channel Fluc/FEX (TC 1.A.43) family.

It localises to the cell inner membrane. It carries out the reaction fluoride(in) = fluoride(out). Its activity is regulated as follows. Na(+) is not transported, but it plays an essential structural role and its presence is essential for fluoride channel function. In terms of biological role, fluoride-specific ion channel. Important for reducing fluoride concentration in the cell, thus reducing its toxicity. The sequence is that of Fluoride-specific ion channel FluC from Leptospira interrogans serogroup Icterohaemorrhagiae serovar Lai (strain 56601).